Reading from the N-terminus, the 168-residue chain is Peptide deformylase (168 aa).

The Fe cation site is built by cysteine 91 and histidine 133. The active site involves glutamate 134. Residue histidine 137 coordinates Fe cation.

It belongs to the polypeptide deformylase family. It depends on Fe(2+) as a cofactor.

It catalyses the reaction N-terminal N-formyl-L-methionyl-[peptide] + H2O = N-terminal L-methionyl-[peptide] + formate. Functionally, removes the formyl group from the N-terminal Met of newly synthesized proteins. Requires at least a dipeptide for an efficient rate of reaction. N-terminal L-methionine is a prerequisite for activity but the enzyme has broad specificity at other positions. This chain is Peptide deformylase, found in Endomicrobium trichonymphae.